The primary structure comprises 289 residues: ATP phosphoribosyltransferase (289 aa).

Belongs to the ATP phosphoribosyltransferase family. Long subfamily. Requires Mg(2+) as cofactor.

Its subcellular location is the cytoplasm. It catalyses the reaction 1-(5-phospho-beta-D-ribosyl)-ATP + diphosphate = 5-phospho-alpha-D-ribose 1-diphosphate + ATP. It functions in the pathway amino-acid biosynthesis; L-histidine biosynthesis; L-histidine from 5-phospho-alpha-D-ribose 1-diphosphate: step 1/9. Its activity is regulated as follows. Feedback inhibited by histidine. In terms of biological role, catalyzes the condensation of ATP and 5-phosphoribose 1-diphosphate to form N'-(5'-phosphoribosyl)-ATP (PR-ATP). Has a crucial role in the pathway because the rate of histidine biosynthesis seems to be controlled primarily by regulation of HisG enzymatic activity. The polypeptide is ATP phosphoribosyltransferase (Desulforudis audaxviator (strain MP104C)).